Reading from the N-terminus, the 189-residue chain is Calcyphosin (189 aa).

4 EF-hand domains span residues Leu21–Val56, Leu57–Gln92, Ala93–Pro128, and Thr136–Ser172. Ca(2+)-binding residues include Asp34, Asp36, Ser38, Ser40, Glu45, Asp70, Asp72, Ser74, Thr76, Glu81, Asp106, Ser108, Asp110, and Asp117. Position 40 is a phosphoserine; by PKA (Ser40).

Monomer. Does not form oligomers in the presence of calcium. Post-translationally, phosphorylated in response to thyrotropin and cAMP. As to expression, detected in thyroid, salivary gland, lung, brain and cerebellum (at protein level).

The protein localises to the cytoplasm. In terms of biological role, calcium-binding protein. May play a role in cellular signaling events (Potential). The protein is Calcyphosin (CAPS) of Canis lupus familiaris (Dog).